A 244-amino-acid polypeptide reads, in one-letter code: Carbonyl reductase [NADPH] 2 (244 aa).

Residue 11 to 39 (LVTGAGKGIGRDTVKALHVSGARVVAVTR) coordinates NADP(+). Serine 136 contacts substrate. Residue tyrosine 149 is the Proton acceptor of the active site. Serine 176 is modified (phosphoserine).

The protein belongs to the short-chain dehydrogenases/reductases (SDR) family. Homotetramer. As to expression, lung (ciliated cells, non-ciliated bronchiolar cells and type-II alveolar pneumocytes). Low expression in all extrapulmonary tissues, including adipose tissue.

It is found in the mitochondrion matrix. It carries out the reaction a secondary alcohol + NADP(+) = a ketone + NADPH + H(+). Allosteric enzyme exhibiting negative cooperativity. Activated 2-5 fold by fatty acids. Functionally, may function in the pulmonary metabolism of endogenous carbonyl compounds, such as aliphatic aldehydes and ketones derived from lipid peroxidation, 3-ketosteroids and fatty aldehydes, as well as in xenobiotic metabolism. This chain is Carbonyl reductase [NADPH] 2 (CBR2), found in Sus scrofa (Pig).